The following is a 410-amino-acid chain: Kelch domain-containing protein 10 (410 aa).

Residues 1–40 (MSAAQGWDRNRRRGGGAAGGASGVSGAGAAGGGRGTGQLN) are disordered. Residue Arg13 is modified to Omega-N-methylarginine. Over residues 15–36 (GGAAGGASGVSGAGAAGGGRGT) the composition is skewed to gly residues. 6 Kelch repeats span residues 87–154 (GPDN…DVHV), 155–198 (CNVK…GYIY), 199–260 (STDL…IHAY), 261–319 (NLET…LQTF), 320–364 (QWVK…GSLF), and 365–403 (KIWL…GLTQ). Positions 369–410 (VVPSLLELAWEKLLAAFPNLANLSRTQLLHLGLTQELIERLK) are interaction with CUL2.

The protein belongs to the KLHDC10 family. In terms of assembly, component of a CRL2 E3 ubiquitin-protein ligase complex, also named ECS (Elongin BC-CUL2/5-SOCS-box protein) complex, composed of CUL2, Elongin BC (ELOB and ELOC), RBX1 and substrate-specific adapter KLHDC10. Interacts (via the 6 Kelch repeats) with PPP5C.

The protein resides in the nucleus. It localises to the cytoplasm. It participates in protein modification; protein ubiquitination. Functionally, substrate-recognition component of a Cul2-RING (CRL2) E3 ubiquitin-protein ligase complex of the DesCEND (destruction via C-end degrons) pathway, which recognizes a C-degron located at the extreme C-terminus of target proteins, leading to their ubiquitination and degradation. The C-degron recognized by the DesCEND pathway is usually a motif of less than ten residues and can be present in full-length proteins, truncated proteins or proteolytically cleaved forms. The CRL2(KLHDC10) complex specifically recognizes proteins with a proline-glycine (Pro-Gly) or an alanine tail (CAT tail) at the C-terminus, leading to their ubiquitination and degradation. The CRL2(KLHDC10) complex is involved in the ribosome-associated quality control (RQC) pathway, which mediates the extraction of incompletely synthesized nascent chains from stalled ribosomes: CRL2(KLHDC10) acts downstream of NEMF and recognizes CAT tails associated with stalled nascent chains, leading to their ubiquitination and degradation. Participates in the oxidative stress-induced cell death through MAP3K5 activation. Inhibits PPP5C phosphatase activity on MAP3K5. Acts as a regulator of necroptosis. The protein is Kelch domain-containing protein 10 of Rattus norvegicus (Rat).